We begin with the raw amino-acid sequence, 305 residues long: tRNA dimethylallyltransferase 2 (305 aa).

14-21 (GPTASGKT) is an ATP binding site. A substrate-binding site is contributed by 16–21 (TASGKT). The tract at residues 39–42 (DSRQ) is interaction with substrate tRNA.

This sequence belongs to the IPP transferase family. As to quaternary structure, monomer. Requires Mg(2+) as cofactor.

It carries out the reaction adenosine(37) in tRNA + dimethylallyl diphosphate = N(6)-dimethylallyladenosine(37) in tRNA + diphosphate. Its function is as follows. Catalyzes the transfer of a dimethylallyl group onto the adenine at position 37 in tRNAs that read codons beginning with uridine, leading to the formation of N6-(dimethylallyl)adenosine (i(6)A). The protein is tRNA dimethylallyltransferase 2 of Trichlorobacter lovleyi (strain ATCC BAA-1151 / DSM 17278 / SZ) (Geobacter lovleyi).